The following is a 152-amino-acid chain: D-aminoacyl-tRNA deacylase (152 aa).

Positions 142–143 (GP) match the Gly-cisPro motif, important for rejection of L-amino acids motif.

This sequence belongs to the DTD family. Homodimer.

The protein resides in the cytoplasm. It carries out the reaction glycyl-tRNA(Ala) + H2O = tRNA(Ala) + glycine + H(+). It catalyses the reaction a D-aminoacyl-tRNA + H2O = a tRNA + a D-alpha-amino acid + H(+). In terms of biological role, an aminoacyl-tRNA editing enzyme that deacylates mischarged D-aminoacyl-tRNAs. Also deacylates mischarged glycyl-tRNA(Ala), protecting cells against glycine mischarging by AlaRS. Acts via tRNA-based rather than protein-based catalysis; rejects L-amino acids rather than detecting D-amino acids in the active site. By recycling D-aminoacyl-tRNA to D-amino acids and free tRNA molecules, this enzyme counteracts the toxicity associated with the formation of D-aminoacyl-tRNA entities in vivo and helps enforce protein L-homochirality. This Burkholderia cenocepacia (strain HI2424) protein is D-aminoacyl-tRNA deacylase.